Here is a 644-residue protein sequence, read N- to C-terminus: Macrolide export ATP-binding/permease protein MacB (644 aa).

One can recognise an ABC transporter domain in the interval 4–242; it reads IECKNINRYF…SNVGRIQEKA (239 aa). 40 to 47 lines the ATP pocket; sequence GQSGSGKS. 4 helical membrane passes run 270 to 290, 524 to 544, 574 to 594, and 607 to 627; these read LLTM…VALG, IALI…LVSV, LICV…SLVF, and AMSV…FGFM.

Belongs to the ABC transporter superfamily. Macrolide exporter (TC 3.A.1.122) family. As to quaternary structure, homodimer.

It is found in the cell inner membrane. Non-canonical ABC transporter that contains transmembrane domains (TMD), which form a pore in the inner membrane, and an ATP-binding domain (NBD), which is responsible for energy generation. Confers resistance against macrolides. This chain is Macrolide export ATP-binding/permease protein MacB, found in Neisseria meningitidis serogroup A / serotype 4A (strain DSM 15465 / Z2491).